A 321-amino-acid chain; its full sequence is Large ribosomal RNA subunit accumulation protein YCED homolog 1, chloroplastic (321 aa).

The transit peptide at 1-32 (MSLVCSLSCVAPLPQTKQSRPSFLKLETCTLS) directs the protein to the chloroplast.

It belongs to the DUF177 domain family.

The protein localises to the plastid. It localises to the chloroplast stroma. Its subcellular location is the chloroplast nucleoid. In terms of biological role, plays a role in synthesis, processing and/or stability of 23S rRNA. Required for embryogenesis. The sequence is that of Large ribosomal RNA subunit accumulation protein YCED homolog 1, chloroplastic from Arabidopsis thaliana (Mouse-ear cress).